The chain runs to 196 residues: Pyridoxine/pyridoxamine 5'-phosphate oxidase (196 aa).

A substrate-binding site is contributed by K49. Residues K66 and Q88 each contribute to the FMN site. Substrate contacts are provided by Y106, R110, and S114. FMN-binding positions include 123-124 and W168; that span reads QS. Residue 174-176 coordinates substrate; the sequence is RLH. Residue R178 coordinates FMN.

It belongs to the pyridoxamine 5'-phosphate oxidase family. As to quaternary structure, homodimer. The cofactor is FMN.

It catalyses the reaction pyridoxamine 5'-phosphate + O2 + H2O = pyridoxal 5'-phosphate + H2O2 + NH4(+). The catalysed reaction is pyridoxine 5'-phosphate + O2 = pyridoxal 5'-phosphate + H2O2. It participates in cofactor metabolism; pyridoxal 5'-phosphate salvage; pyridoxal 5'-phosphate from pyridoxamine 5'-phosphate: step 1/1. It functions in the pathway cofactor metabolism; pyridoxal 5'-phosphate salvage; pyridoxal 5'-phosphate from pyridoxine 5'-phosphate: step 1/1. Its function is as follows. Catalyzes the oxidation of either pyridoxine 5'-phosphate (PNP) or pyridoxamine 5'-phosphate (PMP) into pyridoxal 5'-phosphate (PLP). This chain is Pyridoxine/pyridoxamine 5'-phosphate oxidase, found in Bdellovibrio bacteriovorus (strain ATCC 15356 / DSM 50701 / NCIMB 9529 / HD100).